A 208-amino-acid polypeptide reads, in one-letter code: Ribosome maturation factor RimP (208 aa).

Residues 189–208 (EAPETGATTMARDGSEEETK) form a disordered region.

This sequence belongs to the RimP family.

The protein resides in the cytoplasm. Required for maturation of 30S ribosomal subunits. This is Ribosome maturation factor RimP from Ruegeria pomeroyi (strain ATCC 700808 / DSM 15171 / DSS-3) (Silicibacter pomeroyi).